Consider the following 1220-residue polypeptide: Protein patched homolog 1 (1220 aa).

The disordered stretch occupies residues 1–27 (MASDPRDPGPAGGVFGDLPPSYTRSPP). At 1–84 (MASDPRDPGP…GCHIQRHCGK (84 aa)) the chain is on the cytoplasmic side. The helical transmembrane segment at 85 to 105 (VLFIGLLVFGALSVGLRVAAI) threads the bilayer. Over 106–419 (ETDIEKLWVE…LNDIMKSFSD (314 aa)) the chain is Extracellular. Asn-397 carries an N-linked (GlcNAc...) asparagine glycan. Residues 420-440 (VSVIRVAGGYLLMLAYACVTM) form a helical membrane-spanning segment. Positions 421-579 (SVIRVAGGYL…LLIFPAILSL (159 aa)) constitute an SSD domain. Residues 441 to 449 (LRWDCAKSQ) lie on the Cytoplasmic side of the membrane. Residues 450–470 (GAVGLAGVLLVALSVAAGLGL) traverse the membrane as a helical segment. The Extracellular segment spans residues 471-484 (CSLLGLSFNAATTQ). The helical transmembrane segment at 485–505 (VLPSLALGIGVDDMFLLGHSF) threads the bilayer. Over 506-528 (TETRSNIPFKERTGDCLRRTGTS) the chain is Cytoplasmic. The chain crosses the membrane as a helical span at residues 529–549 (VALTSVNNMIAFFMAALVPIP). At 550–558 (ALRAFSLQA) the chain is on the extracellular side. A helical membrane pass occupies residues 559–579 (AVVVVFNFAMALLIFPAILSL). Over 580–739 (DLHRREDKRL…APLLLKPETK (160 aa)) the chain is Cytoplasmic. Residues 740–760 (TVVVVVFVALLSLSLYGTTMV) traverse the membrane as a helical segment. The Extracellular portion of the chain corresponds to 761–1016 (HDGLYLTDIV…WEQYIGLRHW (256 aa)). N-linked (GlcNAc...) asparagine glycosylation is found at Asn-865 and Asn-888. Residues 1017–1037 (FLLSISVVLACTFLVCAILLL) traverse the membrane as a helical segment. Residues 1038–1044 (NPWTAGV) are Cytoplasmic-facing. The helical transmembrane segment at 1045–1065 (IVFILPMMTVELFGIMGLIGI) threads the bilayer. Residues 1066–1072 (KLSAIPV) lie on the Extracellular side of the membrane. Residues 1073-1093 (VILIASVGIGVEFTVHIALGF) form a helical membrane-spanning segment. The Cytoplasmic segment spans residues 1094–1110 (LTAIGDRNTRSAVAMEH). Residues 1111–1131 (MFAPVIDGAISTLLGVLMLAG) form a helical membrane-spanning segment. Residues 1132–1143 (SEFDFIMRYFFA) lie on the Extracellular side of the membrane. The helical transmembrane segment at 1144 to 1164 (VLAILTLLGILNGLVLLPVLL) threads the bilayer. Residues 1165 to 1220 (SLMGPPAEVVPANNANHLQSPSPEPMPPPMNHHGYYAGHIPKASHQAFSETSDSEY) lie on the Cytoplasmic side of the membrane.

It belongs to the patched family. In terms of processing, glycosylation is necessary for SHH binding. Detected in embryonic presomitic mesoderm, neuroectoderm, tissue surrounding the notochord, ventral neural tube.

The protein localises to the membrane. Its function is as follows. Acts as a receptor for sonic hedgehog (SHH), indian hedgehog (IHH) and desert hedgehog (DHH). Associates with the smoothened protein (SMO) to transduce the hedgehog's proteins signal. The chain is Protein patched homolog 1 (ptch1) from Danio rerio (Zebrafish).